The chain runs to 91 residues: Large ribosomal subunit protein uL22 (91 aa).

Belongs to the universal ribosomal protein uL22 family. In terms of assembly, part of the 50S ribosomal subunit.

Functionally, this protein binds specifically to 23S rRNA; its binding is stimulated by other ribosomal proteins, e.g. L4, L17, and L20. It is important during the early stages of 50S assembly. It makes multiple contacts with different domains of the 23S rRNA in the assembled 50S subunit and ribosome. Its function is as follows. The globular domain of the protein is located near the polypeptide exit tunnel on the outside of the subunit, while an extended beta-hairpin is found that lines the wall of the exit tunnel in the center of the 70S ribosome. This Clover yellow edge phytoplasma protein is Large ribosomal subunit protein uL22 (rplV).